The sequence spans 227 residues: Putative methylase YubD (227 aa).

Belongs to the N(4)/N(6)-methyltransferase family.

A putative beta subtype methylase whose recognition site is unknown. In Escherichia coli (strain K12), this protein is Putative methylase YubD (yubD).